A 545-amino-acid polypeptide reads, in one-letter code: CTP synthase (545 aa).

Residues 1 to 266 are amidoligase domain; the sequence is MTTNYIFVTG…DDYICKRFSL (266 aa). CTP is bound at residue S14. S14 contributes to the UTP binding site. ATP is bound by residues 15-20 and D72; that span reads SLGKGI. The Mg(2+) site is built by D72 and E140. CTP is bound by residues 147-149, 187-192, and K223; these read DIE and KTKPTQ. UTP is bound by residues 187 to 192 and K223; that span reads KTKPTQ. ATP is bound at residue 239–241; it reads KDV. Positions 291–542 constitute a Glutamine amidotransferase type-1 domain; the sequence is TIGMVGKYIE…VKAASEYQKR (252 aa). An L-glutamine-binding site is contributed by G352. C379 acts as the Nucleophile; for glutamine hydrolysis in catalysis. L-glutamine is bound by residues 380–383, E403, and R470; that span reads LGMQ. Residues H515 and E517 contribute to the active site.

The protein belongs to the CTP synthase family. Homotetramer.

The enzyme catalyses UTP + L-glutamine + ATP + H2O = CTP + L-glutamate + ADP + phosphate + 2 H(+). The catalysed reaction is L-glutamine + H2O = L-glutamate + NH4(+). It catalyses the reaction UTP + NH4(+) + ATP = CTP + ADP + phosphate + 2 H(+). It participates in pyrimidine metabolism; CTP biosynthesis via de novo pathway; CTP from UDP: step 2/2. With respect to regulation, allosterically activated by GTP, when glutamine is the substrate; GTP has no effect on the reaction when ammonia is the substrate. The allosteric effector GTP functions by stabilizing the protein conformation that binds the tetrahedral intermediate(s) formed during glutamine hydrolysis. Inhibited by the product CTP, via allosteric rather than competitive inhibition. Its function is as follows. Catalyzes the ATP-dependent amination of UTP to CTP with either L-glutamine or ammonia as the source of nitrogen. Regulates intracellular CTP levels through interactions with the four ribonucleotide triphosphates. The polypeptide is CTP synthase (Klebsiella pneumoniae subsp. pneumoniae (strain ATCC 700721 / MGH 78578)).